The primary structure comprises 122 residues: Ribosome-binding factor A (122 aa).

Belongs to the RbfA family. Monomer. Binds 30S ribosomal subunits, but not 50S ribosomal subunits or 70S ribosomes.

The protein localises to the cytoplasm. Functionally, one of several proteins that assist in the late maturation steps of the functional core of the 30S ribosomal subunit. Associates with free 30S ribosomal subunits (but not with 30S subunits that are part of 70S ribosomes or polysomes). Required for efficient processing of 16S rRNA. May interact with the 5'-terminal helix region of 16S rRNA. The chain is Ribosome-binding factor A from Anaeromyxobacter sp. (strain Fw109-5).